The chain runs to 221 residues: Sigma non-opioid intracellular receptor 1 (221 aa).

At 1–4 (MALW) the chain is on the lumenal side. Residues 5 to 27 (RGLRAVLAVAGLAVAVQLLRGWL) form a helical membrane-spanning segment. Residues 28-221 (GSKSYVFNRE…STHLSELGFF (194 aa)) are Cytoplasmic-facing. Residues 96 to 103 (SLTEYVLL) are important for ligand-binding. The tract at residues 174 to 221 (FIPSTLGFALADTIFSTQDFLTLFYTVKVYGKALLLETSTHLSELGFF) is C-terminal hydrophobic region.

Belongs to the ERG2 family. As to quaternary structure, homotrimer.

Its subcellular location is the nucleus inner membrane. It localises to the nucleus outer membrane. It is found in the nucleus envelope. The protein localises to the cytoplasmic vesicle. The protein resides in the endoplasmic reticulum membrane. Its subcellular location is the membrane. Its function is as follows. May function in lipid transport from the endoplasmic reticulum and be involved in a wide array of cellular functions probably through regulation of the biogenesis of lipid microdomains at the plasma membrane. May regulate calcium efflux at the endoplasmic reticulum. This chain is Sigma non-opioid intracellular receptor 1 (sigmar1), found in Xenopus tropicalis (Western clawed frog).